A 96-amino-acid chain; its full sequence is Acylphosphatase (96 aa).

The 93-residue stretch at 4–96 (RCEFLIFGKV…ESLNDFEILR (93 aa)) folds into the Acylphosphatase-like domain. Catalysis depends on residues Arg19 and Asn42.

This sequence belongs to the acylphosphatase family.

The catalysed reaction is an acyl phosphate + H2O = a carboxylate + phosphate + H(+). The protein is Acylphosphatase (acyP) of Helicobacter hepaticus (strain ATCC 51449 / 3B1).